The chain runs to 499 residues: Argininosuccinate lyase (499 aa).

Residues 1–22 (MSDGEDHETANADDRDETVVRR) form a disordered region. Over residues 7–22 (HETANADDRDETVVRR) the composition is skewed to basic and acidic residues.

Belongs to the lyase 1 family. Argininosuccinate lyase subfamily.

The protein resides in the cytoplasm. It catalyses the reaction 2-(N(omega)-L-arginino)succinate = fumarate + L-arginine. It functions in the pathway amino-acid biosynthesis; L-arginine biosynthesis; L-arginine from L-ornithine and carbamoyl phosphate: step 3/3. This Haloarcula marismortui (strain ATCC 43049 / DSM 3752 / JCM 8966 / VKM B-1809) (Halobacterium marismortui) protein is Argininosuccinate lyase.